Here is an 89-residue protein sequence, read N- to C-terminus: Large ribosomal subunit protein bL27 (89 aa).

The segment at 1 to 21 (MAHKKAGGSSRNGRDSESKRL) is disordered.

Belongs to the bacterial ribosomal protein bL27 family.

The protein is Large ribosomal subunit protein bL27 of Chelativorans sp. (strain BNC1).